The sequence spans 417 residues: Blood group Rh(D) polypeptide (417 aa).

11 helical membrane passes run 12 to 32 (CLPL…YFFT), 44 to 64 (LVAS…GLGF), 77 to 97 (VAFN…LDGF), 107 to 127 (VITL…LISV), 130 to 150 (VLGK…VTAL), 167 to 187 (MNMM…AWCL), 203 to 223 (TIPS…WPSF), 238 to 258 (VFNT…GSSL), 287 to 307 (LIPS…ISVG), 334 to 354 (LLGL…TVGA), and 358 to 378 (MIGF…VIAL).

This sequence belongs to the ammonium transporter (TC 2.A.49) family. Rh subfamily. Palmitoylated. In terms of tissue distribution, restricted to tissues or cell lines expressing erythroid characters.

The protein resides in the cell membrane. Functionally, may be part of an oligomeric complex which is likely to have a transport or channel function in the erythrocyte membrane. The sequence is that of Blood group Rh(D) polypeptide (RHD) from Homo sapiens (Human).